A 396-amino-acid chain; its full sequence is Elongation factor Tu (396 aa).

The region spanning K10–V206 is the tr-type G domain. The segment at G19–T26 is G1. A GTP-binding site is contributed by G19–T26. A Mg(2+)-binding site is contributed by T26. The G2 stretch occupies residues G62 to N66. The G3 stretch occupies residues D83–G86. Residues D83 to H87 and N138 to D141 contribute to the GTP site. Positions N138–D141 are G4. Positions S176–L178 are G5.

It belongs to the TRAFAC class translation factor GTPase superfamily. Classic translation factor GTPase family. EF-Tu/EF-1A subfamily. As to quaternary structure, monomer.

The protein localises to the cytoplasm. It catalyses the reaction GTP + H2O = GDP + phosphate + H(+). In terms of biological role, GTP hydrolase that promotes the GTP-dependent binding of aminoacyl-tRNA to the A-site of ribosomes during protein biosynthesis. The sequence is that of Elongation factor Tu from Micrococcus luteus (strain ATCC 4698 / DSM 20030 / JCM 1464 / CCM 169 / CCUG 5858 / IAM 1056 / NBRC 3333 / NCIMB 9278 / NCTC 2665 / VKM Ac-2230) (Micrococcus lysodeikticus).